Reading from the N-terminus, the 2471-residue chain is MKQNKINKAEILQVDDKHVEENLVAIVGVGFRLPSGSIENERNNTPQTLWNNLINGFDGVVKTSERFNDNFFKNHEIANNYSGLLPLDEVKSFDPLFFGINPNEAPTIDPIQRLLLKCTWEALEDSLIDPISIKGTDTSVFIGCTESDYHNINKNEVKSNVFSSLNHAISNRISYCYDLHGNSITLDTACSSSLNAIALGYDSIKNKKSKMSIVGGVNILLDSYFFKAYSSLNILSKSNGRCKSFDASADGYVRSECIGVVVLKNLKDAIKDGNRIYCTINGASANVDGIGYSDKSNFYSPSSISQSENLKNAIQSTNGTVKPSDIDYVEAHGTGTPTGDPIEVEGISKVFKDTRSTDTPLLIGSFKSNIGHCEAASGIASLIKCCLMYKNKCFAPNIHFKTPNPAIKFKEWNLKVVTEPIPFNKFKNTSMVVNNFGATGSNCCLVLSQFNYNTINNNINNHNNNHNHNHNHNNIKINNYLIPFSANSVESLKKYQSLIIENKEYESQYSFEEFVKNQIYNKSTSLYQRSVIVAKDWNDFNNVENQVKYQTSSSTSSNITITNKNNNPITVFVFCGQGSQYNTMALELYKNEKVFRNSMDMLDNKMKNYFGYSILEKLRAIQDSDKCSVHEQTMAQPSTVIIQVSLYELYKHWGIKASFMLGHSLGEVTTAYCSGMIDIDQLCYLIYHRSTLQIRTNGSGKMLSINISSDEYKTNYMSRYPTIEIACYNSPSSIVIAGNEQILNEISKELKEKEIFSAMLGSLSSFHTSSQNIIKDDILNLNIQSSQPVIPTFSTVTSNLFNESTIFDSEYFFDNISKPVSFTQTISNLYKHIEDNQIGSNIVFIEIAPHPTLSFYLKQMIPKQSQYFRNGESISVYSTLHKKKNDVEEFQKSISQLFCDDAYDINFKCQFNNINSNIEAISNFNLPLYQWDDQHYWLNKSIEHKNNLIGPPISILGNSMQDSNPFIKSYQTIIDTGKDAFKYLKGHNVSDKCYFPGTGYIDNIFKLYPNQDLTINSIEFKVPFVLTDGIGQCLQTNVYQTGKSEYRAQFHLKDEMNNQWINTSNSNFHLNSNDNYHEEKQKLDIQDIKQTKCNLSSIPWDEFYSLMKTQLGANFYGIFSKVVECYIGDNCSLTEISLELPENFHDEQSFFNCPLIDACFHGTVILYIQKNCKIVTDKVEGLRYYASNIPKNRDEHSSIFIYSTLKSSPSDDLLSSSIVVMLEDGTVIIEVDNLVVKSLTPVKDPLLIETPSDFIYTPYLQSKDSQIQSPLEFKSIYQNNQVDDGLLIPNVVIETIKPLINRKMEFRILEFGGNNLSKSTLLLNEINSLLEENPHYEIDIEYTWSDNNSSILKDAKLELSKVDKGYLSILYRSLGLDVDNSLLEKQKLNPSYYDLIIVSNISNLTKDIEYSLNQIYQILTPNGYLIINEQQQQQQQQQQQQQQQQQQQQQLLNNENNKESLKNLLVNCNFNSDIMIKSSSISDSDIKSIIIQAQKPSLKLQPKTINTFDQVILYCYQDEQLQQQQLINKFENHYNNCKIIKVSTIEEFYKLSTTITNNSIIYFIKSIEQLTLENFKSVTFEYVQINQKLYELKSKCTHVLITCDSQSSNYLSSSVLGAARYFDEIPTLQLFTLDFDKDSLTNDLDLFKTIDYLINPKNNIQREFYIKNSGTVYFEMYKKELKNLKNSYKSESYHDLSKQQDQLVSKLDEHFEYQLNSKQIDLEPYEIEVKVKATGINYKDYLKYNEMIKVNEAGIGFDFSGVVSRVGIKSSKEFKVGDQVYGIAYETSSSHIIIDSLLACHKPSKITHVQAASIPAVYSTSLYCLYDVGNLRDEESVLIHSGSGGVGLSGLEILKSNNHSSPIFVTVGSEEKKQYLINTYGDLITGIYSTRDTNYQKQIKNKLIELGYETHGVDLIINTLSSEFMDTNFKCLNPKGRIVDLTTTHLNPNEFIDNSRYRYNIGYNSIEILKVGKSTIKKLLQSISKSIENETLNALIPITEFSNSNIKKSIESIKERKHVGKIVISHDTDIIDKLIEKESMIDYSILKSDYKIKNLGKNVLVTGQTGLILEVLKWITKYNSTVENIIILSKSSLKWELEFLMNYNNNNNNNNNNNKIKYHFKKCDISNWNLINKTIDQVLKDNPTITNIDSIFHFAALQINKKLKDIDMNSLNVSHSAKTFGAVNLHNLSIKRDWKIINFILASSVVSVLGSFDQCSYVSACCVVDSLSQYRKSIGLPSFTINIGGVSDRGYLSRHKLVEAVLGGQGVELISPNQLLGTLDLQIQNPNMPTNAFVNNFNWPLFKSFKQKLHQKFDFILNPINVDNSISMENDTNQSSSSTNVKNKFLNKVSELLSIDPSKINTNIKMINYGADSLITVQLKNWVDKEWSPHLITIQQIQSNSIGMVYQIINDSLDKKKKEMDEKLLPITAKTTTTTKNDPNDKTEYKYIAGGDCCREFSIKFHYSSVVNFII.

The 429-residue stretch at 21–449 (ENLVAIVGVG…GSNCCLVLSQ (429 aa)) folds into the Ketosynthase family 3 (KS3) domain. Residues C190, H332, and H372 each act as for beta-ketoacyl synthase activity in the active site. Residues 654–687 (GIKASFMLGHSLGEVTTAYCSGMIDIDQLCYLIY) are acyl/malonyl transferase. Catalysis depends on S664, which acts as the For acyl/malonyl transferase activity. Residues 953–1075 (ISILGNSMQD…SNFHLNSNDN (123 aa)) are N-terminal hotdog fold. The 293-residue stretch at 953 to 1245 (ISILGNSMQD…VKSLTPVKDP (293 aa)) folds into the PKS/mFAS DH domain. Residue H987 is the Proton acceptor; for dehydratase activity of the active site. Positions 1094–1245 (NLSSIPWDEF…VKSLTPVKDP (152 aa)) are C-terminal hotdog fold. D1157 serves as the catalytic Proton donor; for dehydratase activity. Residues 1426-1469 (IINEQQQQQQQQQQQQQQQQQQQQQLLNNENNKESLKNLLVNCN) adopt a coiled-coil conformation. One can recognise a Carrier domain in the interval 2336–2413 (SSSTNVKNKF…MVYQIINDSL (78 aa)). At S2373 the chain carries O-(pantetheine 4'-phosphoryl)serine.

Requires pantetheine 4'-phosphate as cofactor.

Its function is as follows. Probable polyketide synthase. In Dictyostelium discoideum (Social amoeba), this protein is Probable polyketide synthase 24 (pks24).